The chain runs to 395 residues: Outer membrane protein assembly factor BamB (395 aa).

An N-terminal signal peptide occupies residues 1 to 20 (MKSWCKNLLAAGLSLAMLSA). C21 carries the N-palmitoyl cysteine lipid modification. C21 carries S-diacylglycerol cysteine lipidation.

Belongs to the BamB family. Part of the Bam complex.

The protein localises to the cell outer membrane. Its function is as follows. Part of the outer membrane protein assembly complex, which is involved in assembly and insertion of beta-barrel proteins into the outer membrane. The polypeptide is Outer membrane protein assembly factor BamB (Shewanella oneidensis (strain ATCC 700550 / JCM 31522 / CIP 106686 / LMG 19005 / NCIMB 14063 / MR-1)).